The sequence spans 94 residues: HssA/B-like protein 51 (94 aa).

The disordered stretch occupies residues Met1–Gly25.

This sequence belongs to the hssA/B family.

The sequence is that of HssA/B-like protein 51 (hssl51) from Dictyostelium discoideum (Social amoeba).